A 635-amino-acid polypeptide reads, in one-letter code: MANKSTENGIYSVSGEEKKGPLIAPGPDGAPAKGDGPAALGAPGSLLAVPPRETWTRQMDFIMSCVGFAVGLGNVWRFPYLCYKNGGGVFLIPYILIALIGGIPIFFLEISLGQFMKAGSINVWNICPLFKGLGYASMVIVFYCNTYYIMVLAWGFYYLVKSFTTTLPWATCGHTWNTPDCVEIFRHEDCANATMANLTCDQLADRRSPVIEFWENKVLRLSEGLEVPGALNWEVTLCLLTCWVLVYFCVWKGVKSTGKIVYFTATFPYVVLVVLLVRGVLLPGALDGIIYYLKPDWSKLASPQVWIDAGTQIFFSYAIGLGALTALGSYNRFNNNCYKDAIILALINSGTSFFAGFVVFSILGFMATEQGVHISKVAESGPGLAFIAYPRAVTLMPVAPLWAALFFFMLLLLGLDSQFVGVEGFITGLLDLLPASYYFRFQREISVALCCTICFVIDLSMVTDGGMYVFQLFDYYSASGTTLLWQAFWECVVVAWVYGADRFMDDVACMIGYRPCPWMKWCWSFFTPLVCMGIFIFNVVYHEPLVYNNTYVYPWWGEAVGWAFALSSMLCVPLHLLGCLLRAKGTMAERWQHLTQPIWGLHHLEYRAQDSDVRGLTTLTPVSESSKVVVVESVM.

Polar residues predominate over residues Met1–Tyr11. The disordered stretch occupies residues Met1–Pro27. Residues Met1–Asp60 are Cytoplasmic-facing. A helical transmembrane segment spans residues Phe61 to Leu81. Over Cys82–Gly87 the chain is Extracellular. A helical membrane pass occupies residues Gly88 to Leu108. Topologically, residues Glu109–Met138 are cytoplasmic. The chain crosses the membrane as a helical span at residues Val139 to Leu159. Topologically, residues Val160 to Ala230 are extracellular. N-linked (GlcNAc...) asparagine glycosylation is found at Asn192 and Asn197. Residues Leu231 to Trp251 traverse the membrane as a helical segment. Over Lys252 to Tyr269 the chain is Cytoplasmic. A helical transmembrane segment spans residues Val270–Ile290. Residues Tyr291–Gln304 lie on the Extracellular side of the membrane. Residues Val305–Thr325 form a helical membrane-spanning segment. Over Ala326 to Ala341 the chain is Cytoplasmic. A helical transmembrane segment spans residues Ile342–Ile362. At Leu363–Thr394 the chain is on the extracellular side. A helical membrane pass occupies residues Leu395–Leu415. Topologically, residues Asp416–Glu444 are cytoplasmic. A helical membrane pass occupies residues Ile445 to Gly465. The Extracellular portion of the chain corresponds to Gly466–Ser479. The helical transmembrane segment at Gly480 to Ala500 threads the bilayer. Over Asp501 to Lys520 the chain is Cytoplasmic. Residues Trp521–Tyr541 form a helical membrane-spanning segment. Residues His542–Val560 are Extracellular-facing. N-linked (GlcNAc...) asparagine glycosylation occurs at Asn548. A helical transmembrane segment spans residues Gly561–Leu581. Topologically, residues Arg582 to Met635 are cytoplasmic. A phosphothreonine mark is found at Thr617 and Thr620. Ser623 bears the Phosphoserine mark.

It belongs to the sodium:neurotransmitter symporter (SNF) (TC 2.A.22) family. SLC6A8 subfamily. In terms of processing, glycosylated.

The protein resides in the cell membrane. It localises to the apical cell membrane. The catalysed reaction is creatine(out) + chloride(out) + 2 Na(+)(out) = creatine(in) + chloride(in) + 2 Na(+)(in). In terms of biological role, creatine:sodium symporter which mediates the uptake of creatine. Plays an important role in supplying creatine to the brain via the blood-brain barrier. This Bos taurus (Bovine) protein is Sodium- and chloride-dependent creatine transporter 1 (SLC6A8).